A 91-amino-acid polypeptide reads, in one-letter code: ATP-dependent Clp protease adapter protein ClpS (91 aa).

The protein belongs to the ClpS family. As to quaternary structure, binds to the N-terminal domain of the chaperone ClpA.

In terms of biological role, involved in the modulation of the specificity of the ClpAP-mediated ATP-dependent protein degradation. The chain is ATP-dependent Clp protease adapter protein ClpS from Helicobacter pylori (strain ATCC 700392 / 26695) (Campylobacter pylori).